The chain runs to 623 residues: tRNA 5-methylaminomethyl-2-thiouridine biosynthesis bifunctional protein MnmC (623 aa).

A tRNA (mnm(5)s(2)U34)-methyltransferase region spans residues 1–244 (MCVSSSIQTA…KREMLKAIWP (244 aa)). The segment at 268–623 (IGAGIAGLHC…VKIKKPYYSS (356 aa)) is FAD-dependent cmnm(5)s(2)U34 oxidoreductase.

In the N-terminal section; belongs to the methyltransferase superfamily. tRNA (mnm(5)s(2)U34)-methyltransferase family. It in the C-terminal section; belongs to the DAO family. FAD serves as cofactor.

It is found in the cytoplasm. It carries out the reaction 5-aminomethyl-2-thiouridine(34) in tRNA + S-adenosyl-L-methionine = 5-methylaminomethyl-2-thiouridine(34) in tRNA + S-adenosyl-L-homocysteine + H(+). In terms of biological role, catalyzes the last two steps in the biosynthesis of 5-methylaminomethyl-2-thiouridine (mnm(5)s(2)U) at the wobble position (U34) in tRNA. Catalyzes the FAD-dependent demodification of cmnm(5)s(2)U34 to nm(5)s(2)U34, followed by the transfer of a methyl group from S-adenosyl-L-methionine to nm(5)s(2)U34, to form mnm(5)s(2)U34. The chain is tRNA 5-methylaminomethyl-2-thiouridine biosynthesis bifunctional protein MnmC from Acinetobacter baylyi (strain ATCC 33305 / BD413 / ADP1).